A 506-amino-acid polypeptide reads, in one-letter code: ATP synthase subunit alpha, chloroplastic (506 aa).

Residue Gly-172–Thr-179 coordinates ATP.

This sequence belongs to the ATPase alpha/beta chains family. F-type ATPases have 2 components, CF(1) - the catalytic core - and CF(0) - the membrane proton channel. CF(1) has five subunits: alpha(3), beta(3), gamma(1), delta(1), epsilon(1). CF(0) has four main subunits: a, b, b' and c.

The protein localises to the plastid. It is found in the chloroplast thylakoid membrane. The catalysed reaction is ATP + H2O + 4 H(+)(in) = ADP + phosphate + 5 H(+)(out). Its function is as follows. Produces ATP from ADP in the presence of a proton gradient across the membrane. The alpha chain is a regulatory subunit. This Pleurastrum terricola (Filamentous green alga) protein is ATP synthase subunit alpha, chloroplastic.